The primary structure comprises 130 residues: Small ribosomal subunit protein uS9 (130 aa).

Residues 99–110 are compositionally biased toward basic and acidic residues; that stretch reads KKAGFLTRDPRM. The disordered stretch occupies residues 99 to 130; that stretch reads KKAGFLTRDPRMKERKKYGLKKARRAPQFSKR. A compositionally biased stretch (basic residues) spans 111–130; sequence KERKKYGLKKARRAPQFSKR.

This sequence belongs to the universal ribosomal protein uS9 family.

This is Small ribosomal subunit protein uS9 from Clostridium botulinum (strain Alaska E43 / Type E3).